We begin with the raw amino-acid sequence, 179 residues long: Centromere protein R (179 aa).

The segment at 1-79 (MSAKRSLKLD…RLSRRGQPQT (79 aa)) is disordered. A compositionally biased stretch (polar residues) spans 30 to 50 (NSYSPTTGTCQISPFSSPTSH). The span at 51–64 (NAEDLRNGLSHGDE) shows a compositional bias: basic and acidic residues. The LXXLL motif signature appears at 172–176 (LQLLL).

Its subcellular location is the nucleus. It is found in the chromosome. The protein resides in the centromere. It localises to the kinetochore. Functionally, transcription coregulator that can have both coactivator and corepressor functions. Involved in the coactivation of nuclear receptors for retinoid X (RXRs) and thyroid hormone (TRs) in a ligand-dependent fashion. Probable component of a centromeric complex involved in assembly of kinetochore proteins, mitotic progression and chromosome segregation. The polypeptide is Centromere protein R (CENPR) (Gallus gallus (Chicken)).